Consider the following 340-residue polypeptide: TATA-box-binding protein (340 aa).

A disordered region spans residues 1-78; it reads MNLNSPAVSM…HSLQGSSMQM (78 aa). Positions 57 to 68 are enriched in low complexity; that stretch reads PQSIQPMQSQQM. The segment covering 69 to 78 has biased composition (polar residues); the sequence is HSLQGSSMQM. 2 consecutive repeat copies span residues 168–244 and 258–335.

This sequence belongs to the TBP family. As to quaternary structure, component of the TFIID basal transcription factor complex, composed of TATA-box-binding protein tbp-1, and a number of TBP-associated factors (TAFs). Binds DNA as monomer.

It localises to the nucleus. The TFIID basal transcription factor complex plays a major role in the initiation of RNA polymerase II (Pol II)-dependent transcription. TFIID recognizes and binds promoters via its subunit tbp-1, a TATA-box-binding protein, and promotes assembly of the pre-initiation complex (PIC). The TFIID complex consists of tbp-1 and TBP-associated factors (TAFs). General transcription factor that functions at the core of the TFIID complex. This chain is TATA-box-binding protein (tbp-1), found in Caenorhabditis elegans.